Consider the following 311-residue polypeptide: Porphobilinogen deaminase (311 aa).

Cysteine 241 is subject to S-(dipyrrolylmethanemethyl)cysteine.

This sequence belongs to the HMBS family. As to quaternary structure, monomer. The cofactor is dipyrromethane.

The catalysed reaction is 4 porphobilinogen + H2O = hydroxymethylbilane + 4 NH4(+). It participates in porphyrin-containing compound metabolism; protoporphyrin-IX biosynthesis; coproporphyrinogen-III from 5-aminolevulinate: step 2/4. Its function is as follows. Tetrapolymerization of the monopyrrole PBG into the hydroxymethylbilane pre-uroporphyrinogen in several discrete steps. This Halalkalibacterium halodurans (strain ATCC BAA-125 / DSM 18197 / FERM 7344 / JCM 9153 / C-125) (Bacillus halodurans) protein is Porphobilinogen deaminase (hemC).